The sequence spans 309 residues: Zinc-finger homeodomain protein 5 (309 aa).

Basic and acidic residues predominate over residues 1–16 (MDMRSHEMIERRREDN). Residues 1-21 (MDMRSHEMIERRREDNGNNNG) form a disordered region. The segment at 76-125 (YRECLKNHAASVGGSVHDGCGEFMPSGEEGTIEALRCAACDCHRNFHRKE) adopts a ZF-HD dimerization-type; degenerate zinc-finger fold. The segment at residues 240–303 (KKRFRTKFTT…NNKNNAKKPP (64 aa)) is a DNA-binding region (homeobox).

Homo- and heterodimer with other ZFHD proteins. Interacts with MIF1, MIF2 and MIF3; these interactions prevent nuclear localization and DNA-binding to inhibit transcription regulation activity. Binds to ZHD1, ZHD2, ZHD4, ZHD10 and ZHD11. Mostly expressed in flowers and inflorescence.

The protein resides in the nucleus. Putative transcription factor. Binds DNA at 5'-ATTA-3' consensus promoter regions. Regulates floral architecture and leaf development. Regulators in the abscisic acid (ABA) signal pathway that confers sensitivity to ABA in an ARF2-dependent manner. This Arabidopsis thaliana (Mouse-ear cress) protein is Zinc-finger homeodomain protein 5 (ZHD5).